Here is a 70-residue protein sequence, read N- to C-terminus: Large ribosomal subunit protein bL31 (70 aa).

Positions 16, 18, 37, and 40 each coordinate Zn(2+).

This sequence belongs to the bacterial ribosomal protein bL31 family. Type A subfamily. As to quaternary structure, part of the 50S ribosomal subunit. It depends on Zn(2+) as a cofactor.

In terms of biological role, binds the 23S rRNA. This chain is Large ribosomal subunit protein bL31, found in Histophilus somni (strain 2336) (Haemophilus somnus).